A 193-amino-acid chain; its full sequence is Cuticle protein 18.7 (193 aa).

Its function is as follows. Component of the cuticle of migratory locust which contains more than 100 different structural proteins. The sequence is that of Cuticle protein 18.7 from Locusta migratoria (Migratory locust).